The following is a 426-amino-acid chain: Serine/threonine-protein kinase ssn3 (426 aa).

The 328-residue stretch at 41–368 (YHIVGFISSG…AREALEHPYF (328 aa)) folds into the Protein kinase domain. Residues 47–55 (ISSGTYGRV) and K71 each bind ATP. Catalysis depends on D173, which acts as the Proton acceptor. The segment at 390-426 (RVTQDDNDIRSGSLPGTKRSGLPDDSLMGRAAKRLKE) is disordered.

It belongs to the protein kinase superfamily. CMGC Ser/Thr protein kinase family. CDC2/CDKX subfamily. As to quaternary structure, component of the srb8-11 complex, a regulatory module of the Mediator complex. Requires Mg(2+) as cofactor.

It is found in the nucleus. The catalysed reaction is L-seryl-[protein] + ATP = O-phospho-L-seryl-[protein] + ADP + H(+). It carries out the reaction L-threonyl-[protein] + ATP = O-phospho-L-threonyl-[protein] + ADP + H(+). The enzyme catalyses [DNA-directed RNA polymerase] + ATP = phospho-[DNA-directed RNA polymerase] + ADP + H(+). Component of the srb8-11 complex. The srb8-11 complex is a regulatory module of the Mediator complex which is itself dependent transcription. The srb8-11 complex may be involved in the transcriptional repression of a subset of genes regulated by Mediator. It may inhibit the association of the Mediator complex with RNA polymerase II to form the holoenzyme complex. The srb8-11 complex phosphorylates the C-terminal domain (CTD) of the largest subunit of RNA polymerase II. This is Serine/threonine-protein kinase ssn3 (ssn3) from Neosartorya fischeri (strain ATCC 1020 / DSM 3700 / CBS 544.65 / FGSC A1164 / JCM 1740 / NRRL 181 / WB 181) (Aspergillus fischerianus).